Reading from the N-terminus, the 249-residue chain is Dof zinc finger protein DOF4.5 (249 aa).

The Dof-type zinc-finger motif lies at 25–79; the sequence is RVCARCDSDNTKFCYYNNYCEFQPRYFCKNCRRYWTHGGALRNIPIGGSSRAKRA. Residues Cys-27, Cys-30, Cys-52, and Cys-55 each coordinate Zn(2+).

Its subcellular location is the nucleus. Transcription factor that binds specifically to a 5'-AA[AG]G-3' consensus core sequence. This chain is Dof zinc finger protein DOF4.5 (DOF4.5), found in Arabidopsis thaliana (Mouse-ear cress).